Here is a 473-residue protein sequence, read N- to C-terminus: tRNA-2-methylthio-N(6)-dimethylallyladenosine synthase (473 aa).

Positions 1–21 are disordered; the sequence is MTQDSALLQAPEAIPSESLRD. Positions 26–146 constitute an MTTase N-terminal domain; it reads RKVFIKTYGC…LPEALRRAKQ (121 aa). Cys35, Cys71, Cys109, Cys187, Cys191, and Cys194 together coordinate [4Fe-4S] cluster. A Radical SAM core domain is found at 173–405; it reads RARGVTAFLT…QMLLLKQQQE (233 aa). Residues 408-470 enclose the TRAM domain; it reads ESCVGKEIDL…TNSLFAEHAE (63 aa).

Belongs to the methylthiotransferase family. MiaB subfamily. In terms of assembly, monomer. Requires [4Fe-4S] cluster as cofactor.

The protein resides in the cytoplasm. The enzyme catalyses N(6)-dimethylallyladenosine(37) in tRNA + (sulfur carrier)-SH + AH2 + 2 S-adenosyl-L-methionine = 2-methylsulfanyl-N(6)-dimethylallyladenosine(37) in tRNA + (sulfur carrier)-H + 5'-deoxyadenosine + L-methionine + A + S-adenosyl-L-homocysteine + 2 H(+). Catalyzes the methylthiolation of N6-(dimethylallyl)adenosine (i(6)A), leading to the formation of 2-methylthio-N6-(dimethylallyl)adenosine (ms(2)i(6)A) at position 37 in tRNAs that read codons beginning with uridine. This is tRNA-2-methylthio-N(6)-dimethylallyladenosine synthase from Rhizobium johnstonii (strain DSM 114642 / LMG 32736 / 3841) (Rhizobium leguminosarum bv. viciae).